The sequence spans 165 residues: Lipoprotein signal peptidase (165 aa).

A run of 3 helical transmembrane segments spans residues 9–29 (FLAIACFVLIDWVTKLAVLLY), 69–89 (KYFLFFIRITIILGILAFLFL), and 98–118 (IRFSLILLCSGAIGNVGDIVF). Active-site residues include Asp-124 and Asp-142. Residues 133–153 (WFFPTFNFADIFISLGTLIFI) traverse the membrane as a helical segment.

It belongs to the peptidase A8 family.

Its subcellular location is the cell inner membrane. The catalysed reaction is Release of signal peptides from bacterial membrane prolipoproteins. Hydrolyzes -Xaa-Yaa-Zaa-|-(S,diacylglyceryl)Cys-, in which Xaa is hydrophobic (preferably Leu), and Yaa (Ala or Ser) and Zaa (Gly or Ala) have small, neutral side chains.. The protein operates within protein modification; lipoprotein biosynthesis (signal peptide cleavage). Its function is as follows. This protein specifically catalyzes the removal of signal peptides from prolipoproteins. The polypeptide is Lipoprotein signal peptidase (Chlamydia abortus (strain DSM 27085 / S26/3) (Chlamydophila abortus)).